The following is a 136-amino-acid chain: Secreted RxLR effector protein 15 (136 aa).

An N-terminal signal peptide occupies residues 1–22 (MRGHSALMMAVVTLAAVSSGAA). The RxLR signature appears at 47 to 50 (RLLR).

The protein belongs to the RxLR effector family.

The protein resides in the secreted. It localises to the host nucleus. It is found in the host cytoplasm. Its function is as follows. Effector that completely suppresses the host cell death induced by cell death-inducing proteins. This is Secreted RxLR effector protein 15 from Plasmopara viticola (Downy mildew of grapevine).